The chain runs to 338 residues: Secretory carrier-associated membrane protein 1 (338 aa).

The disordered stretch occupies residues 1–64 (MSDFDSNPFA…NVPNTQPAIM (64 aa)). Ser-2 carries the N-acetylserine modification. At Ser-2 the chain carries Phosphoserine. The Cytoplasmic segment spans residues 2 to 155 (SDFDSNPFAD…QKTVKLMYYL (154 aa)). The residue at position 45 (Thr-45) is a Phosphothreonine. Residues 156 to 176 (WMFHAVTLFLNIFGCLAWFCV) form a helical membrane-spanning segment. Residues 177–181 (DSSRA) lie on the Lumenal side of the membrane. A helical membrane pass occupies residues 182–202 (VDFGLSILWFLLFTPCSFVCW). The Cytoplasmic segment spans residues 203 to 218 (YRPLYGAFRSDSSFRF). Residues 219–239 (FVFFFVYICQFAVHVLQAAGF) form a helical membrane-spanning segment. The Lumenal segment spans residues 240–261 (HNWGNCGWISSLTGLNKNIPVG). Residues 262 to 282 (IMMIIIAALFTASAVISLVMF) traverse the membrane as a helical segment. Residues 283–338 (KKVHGLYRTTGASFEKAQQEFATGVMSNKTVQTAAANAASTAATSAAQNAFKGNQM) lie on the Cytoplasmic side of the membrane.

It belongs to the SCAMP family. Interacts with SYNRG, ITSN1 and SLC9A7.

The protein localises to the golgi apparatus. It localises to the trans-Golgi network membrane. Its subcellular location is the recycling endosome membrane. Functionally, functions in post-Golgi recycling pathways. Acts as a recycling carrier to the cell surface. The polypeptide is Secretory carrier-associated membrane protein 1 (Scamp1) (Mus musculus (Mouse)).